Here is a 357-residue protein sequence, read N- to C-terminus: Histidinol-phosphate aminotransferase (357 aa).

Lysine 221 carries the N6-(pyridoxal phosphate)lysine modification.

It belongs to the class-II pyridoxal-phosphate-dependent aminotransferase family. Histidinol-phosphate aminotransferase subfamily. Requires pyridoxal 5'-phosphate as cofactor.

It catalyses the reaction L-histidinol phosphate + 2-oxoglutarate = 3-(imidazol-4-yl)-2-oxopropyl phosphate + L-glutamate. Its pathway is amino-acid biosynthesis; L-histidine biosynthesis; L-histidine from 5-phospho-alpha-D-ribose 1-diphosphate: step 7/9. The protein is Histidinol-phosphate aminotransferase (hisC) of Sulfurisphaera tokodaii (strain DSM 16993 / JCM 10545 / NBRC 100140 / 7) (Sulfolobus tokodaii).